A 525-amino-acid chain; its full sequence is Sucrose transport protein (525 aa).

Residues 1-37 are Cytoplasmic-facing; sequence MAGRNIKNGENNKIAGSSLHLEKNPTTPPEAEATLKK. 12 helical membrane-spanning segments follow: residues 38 to 58, 72 to 92, 107 to 127, 145 to 165, 184 to 204, 230 to 250, 295 to 315, 338 to 358, 373 to 393, 422 to 442, 455 to 475, and 488 to 508; these read LGLV…QLSL, WAAY…PLVG, PFIA…GFAA, AIAV…TLQG, YANA…YAAG, SCFF…LSVV, MLIL…FLLF, GVHA…VMSL, LWGI…LVTK, LAIF…PFAL, GLSL…VSVT, and LPAF…SFTL. At 509–525 the chain is on the cytoplasmic side; sequence LPSPPPEAKIGGSMGGH.

Belongs to the glycoside-pentoside-hexuronide (GPH) cation symporter transporter (TC 2.A.2.4) family.

The protein resides in the membrane. The protein operates within glycan biosynthesis; sucrose metabolism. Responsible for the transport of sucrose into the cell, with the concomitant uptake of protons (symport system). Can also transport maltose at a lesser rate. The chain is Sucrose transport protein from Spinacia oleracea (Spinach).